A 215-amino-acid chain; its full sequence is Pyrrolidone-carboxylate peptidase (215 aa).

Residues Glu-78, Cys-141, and His-165 contribute to the active site.

It belongs to the peptidase C15 family. Homotetramer.

It localises to the cytoplasm. The enzyme catalyses Release of an N-terminal pyroglutamyl group from a polypeptide, the second amino acid generally not being Pro.. Functionally, removes 5-oxoproline from various penultimate amino acid residues except L-proline. This chain is Pyrrolidone-carboxylate peptidase, found in Streptococcus suis (strain 98HAH33).